A 479-amino-acid chain; its full sequence is Poly(A) polymerase catalytic subunit (479 aa).

Catalysis depends on residues Asp-202 and Asp-204. Ca(2+) is bound by residues Asp-202, Asp-204, and Asp-253.

It belongs to the poxviridae poly(A) polymerase catalytic subunit family. In terms of assembly, heterodimer of a large (catalytic) subunit and a small (regulatory) subunit.

The enzyme catalyses RNA(n) + ATP = RNA(n)-3'-adenine ribonucleotide + diphosphate. Polymerase that creates the 3'-poly(A) tail of mRNA's. The protein is Poly(A) polymerase catalytic subunit (OPG063) of Cowpox virus (strain GRI-90 / Grishak) (CPV).